Here is a 608-residue protein sequence, read N- to C-terminus: Histone-arginine methyltransferase CARM1 (608 aa).

The tract at residues 28–139 is interaction with C9orf72; it reads ATVSVFPGAR…GHTLERSVFS (112 aa). Positions 147 to 454 constitute an SAM-dependent MTase PRMT-type domain; sequence AVQYFQFYGY…KRQSYDISIV (308 aa). Residues Q160, R169, G193, and E215 each coordinate S-adenosyl-L-methionine. Position 217 is a phosphoserine (S217). A Glycyl lysine isopeptide (Lys-Gly) (interchain with G-Cter in ubiquitin) cross-link involves residue K228. S-adenosyl-L-methionine contacts are provided by E244 and S272. Positions 347 to 380 are required for nuclear translocation; that stretch reads RILMAKSVKYTVNFLEAKEGDLHRIEIPFKFHML. The tract at residues 500–608 is transactivation domain; it reads TGSTYNLSSG…IPTNTMHYGS (109 aa). Residue R551 is modified to Dimethylated arginine.

The protein belongs to the class I-like SAM-binding methyltransferase superfamily. Protein arginine N-methyltransferase family. As to quaternary structure, homodimer. Interacts with NR1H4. Interacts with SNRPC. Interacts with the C-terminus of NCOA2/GRIP1, NCO3/ACTR and NCOA1/SRC1. Part of a complex consisting of CARM1, EP300/P300 and NCOA2/GRIP1. Interacts with FLII, TP53, myogenic factor MEF2, EP300/P300, TRIM24, CREBBP and CTNNB1. Interacts with RELA. Identified in a complex containing CARM1, TRIM24 and NCOA2/GRIP1. Interacts with NCOA3/SRC3. Interacts with SKP2. Interacts (via PH domain-like fold) with C9orf72. Interacts with PARP1; promoting PARP1 recruimtent to replication forks. In terms of processing, phosphorylation at Ser-217 is strongly increased during mitosis, and decreases rapidly to a very low, basal level after entry into the G1 phase of the cell cycle. Phosphorylation at Ser-217 interferes with S-adenosyl-L-methionine binding and strongly reduces methyltransferase activity. Phosphorylation at Ser-217 may promote cytosolic location. Post-translationally, auto-methylated on Arg-551. Methylation enhances transcription coactivator activity. Methylation is required for its role in the regulation of pre-mRNA alternative splicing. Ubiquitinated by E3 ubiquitin-protein ligase complex containing FBXO9 at Lys-228; leading to proteasomal degradation. As to expression, ubiquitously expressed. Within the brain, present in proliferating cells from lateral ventricular zone and dentate gyrus (at protein level).

It localises to the nucleus. Its subcellular location is the cytoplasm. It is found in the chromosome. The catalysed reaction is L-arginyl-[protein] + 2 S-adenosyl-L-methionine = N(omega),N(omega)-dimethyl-L-arginyl-[protein] + 2 S-adenosyl-L-homocysteine + 2 H(+). Its activity is regulated as follows. Methylation of H3R17 (H3R17me) by CARM1 is stimulated by preacetylation of H3 'Lys-18' (H3K18ac) H3 'Lys-23' (H3K23ac) by EP300 and blocked by citrullination of H3 'Arg-17' (H3R17ci) by PADI4. In terms of biological role, methylates (mono- and asymmetric dimethylation) the guanidino nitrogens of arginyl residues in several proteins involved in DNA packaging, transcription regulation, pre-mRNA splicing, and mRNA stability. Recruited to promoters upon gene activation together with histone acetyltransferases from EP300/P300 and p160 families, methylates histone H3 at 'Arg-17' (H3R17me), forming mainly asymmetric dimethylarginine (H3R17me2a), leading to activation of transcription via chromatin remodeling. During nuclear hormone receptor activation and TCF7L2/TCF4 activation, acts synergically with EP300/P300 and either one of the p160 histone acetyltransferases NCOA1/SRC1, NCOA2/GRIP1 and NCOA3/ACTR or CTNNB1/beta-catenin to activate transcription. During myogenic transcriptional activation, acts together with NCOA3/ACTR as a coactivator for MEF2C. During monocyte inflammatory stimulation, acts together with EP300/P300 as a coactivator for NF-kappa-B. Acts as a coactivator for PPARG, promotes adipocyte differentiation and the accumulation of brown fat tissue. Plays a role in the regulation of pre-mRNA alternative splicing by methylation of splicing factors. Also seems to be involved in p53/TP53 transcriptional activation. Methylates EP300/P300, both at 'Arg-2142', which may loosen its interaction with NCOA2/GRIP1, and at 'Arg-580' and 'Arg-604' in the KIX domain, which impairs its interaction with CREB and inhibits CREB-dependent transcriptional activation. Also methylates arginine residues in RNA-binding proteins PABPC1, ELAVL1 and ELAV4, which may affect their mRNA-stabilizing properties and the half-life of their target mRNAs. Acts as a transcriptional coactivator of ACACA/acetyl-CoA carboxylase by enriching H3R17 methylation at its promoter, thereby positively regulating fatty acid synthesis. Independently of its methyltransferase activity, involved in replication fork progression: promotes PARP1 recruitment to replication forks, leading to poly-ADP-ribosylation of chromatin at replication forks and reduced fork speed. The protein is Histone-arginine methyltransferase CARM1 (Carm1) of Mus musculus (Mouse).